The chain runs to 481 residues: Proton-coupled amino acid transporter 2 (481 aa).

Topologically, residues 1–56 (MSVTKSAGSPQVAATVKLDLVSFPESAKKVQSQDPNPVNGSSSESSEKTKGITGFQ) are cytoplasmic. The interval 26–49 (SAKKVQSQDPNPVNGSSSESSEKT) is disordered. A compositionally biased stretch (polar residues) spans 29 to 40 (KVQSQDPNPVNG). A helical membrane pass occupies residues 57–77 (TLVHLVKGNMGTGILGLPLAV). Over 78–79 (KN) the chain is Extracellular. A helical membrane pass occupies residues 80 to 100 (AGILMGPLSLLVMGLIACHCM). At 101-146 (HILVRCAQRFCHRLNKPFMDYGDTVMHGLASSPNTWLQSHAHWGRH) the chain is on the cytoplasmic side. The helical transmembrane segment at 147-167 (AVSFFLIVTQLGFCCVYIVFL) threads the bilayer. The Extracellular portion of the chain corresponds to 168–195 (ADNLKQVVEAVNSTTISCHKNETVVLTP). The helical transmembrane segment at 196-216 (TIDSRLYMLAFLPVLGLLVFI) threads the bilayer. Over 217–220 (RNLR) the chain is Cytoplasmic. A helical membrane pass occupies residues 221–241 (VLTIFSLLANVSMLVSLVIIG). The Extracellular portion of the chain corresponds to 242-262 (QYIIQGIPDPSQLPLVASWKT). The chain crosses the membrane as a helical span at residues 263–283 (YPLFFGTAIFSFESIGVVLPL). The Cytoplasmic segment spans residues 284–295 (ENKMKDARRFPT). Residues 296-316 (ILSLGMSIITTLYIAIGALGY) traverse the membrane as a helical segment. Topologically, residues 317–343 (LRFGDDIKASITLNLPNCWLYQSVKLL) are extracellular. Residues 344 to 364 (YVVGILCTHALQFYVPAEIII) form a helical membrane-spanning segment. At 365-377 (PLAVSQVSKRWAL) the chain is on the cytoplasmic side. Residues 378–398 (PVDLSIRLALVCVTCMLAILI) traverse the membrane as a helical segment. Topologically, residues 399–402 (PRLD) are extracellular. The chain crosses the membrane as a helical span at residues 403-423 (LVLSLVGSVSSSALALIIPPL). Residues 424–444 (LEVTTYYGEGMSPLTITKDAL) are Cytoplasmic-facing. The helical transmembrane segment at 445 to 465 (ISILGFMGFVVGTYQALDELI) threads the bilayer. Over 466 to 481 (RSGNSLPLSNSTMFIQ) the chain is Extracellular.

This sequence belongs to the amino acid/polyamine transporter 2 family. In terms of tissue distribution, expressed in lung and spleen, and to a lower extent in brain, heart, kidney and skeletal muscle.

It localises to the cell membrane. It is found in the endoplasmic reticulum membrane. The protein localises to the recycling endosome membrane. It carries out the reaction glycine(in) + H(+)(in) = glycine(out) + H(+)(out). The catalysed reaction is L-alanine(in) + H(+)(in) = L-alanine(out) + H(+)(out). It catalyses the reaction D-alanine(in) + H(+)(in) = D-alanine(out) + H(+)(out). The enzyme catalyses L-proline(out) + H(+)(out) = L-proline(in) + H(+)(in). It carries out the reaction D-proline(out) + H(+)(out) = D-proline(in) + H(+)(in). The catalysed reaction is 4-hydroxy-L-proline(in) + H(+)(in) = 4-hydroxy-L-proline(out) + H(+)(out). It catalyses the reaction L-serine(in) + H(+)(in) = L-serine(out) + H(+)(out). The enzyme catalyses D-serine(out) + H(+)(out) = D-serine(in) + H(+)(in). It carries out the reaction beta-alanine(in) + H(+)(in) = beta-alanine(out) + H(+)(out). The catalysed reaction is 4-aminobutanoate(in) + H(+)(in) = 4-aminobutanoate(out) + H(+)(out). It catalyses the reaction sarcosine(in) + H(+)(in) = sarcosine(out) + H(+)(out). The enzyme catalyses N,N-dimethylglycine(in) + H(+)(in) = N,N-dimethylglycine(out) + H(+)(out). Inhibited by L- and D-pipecolic acid, nipecotic acid, isonipecotic acid, L- and D-cycloserine, and L-2-azetidine-carboxylate. Functionally, electrogenic proton/amino acid symporter with a high selectivity for the small side chains amino acids glycine, alanine and proline, where both L- and D-enantiomers are transported. Extension of the backbone length, as in beta-alanine and 4-aminobutanoate or methylation of the amino group, as in sarcosine and N,N-dimethylglycine, are also tolerated but decrease transport efficiency. A free carboxyl group is preferred. The protein is Proton-coupled amino acid transporter 2 of Rattus norvegicus (Rat).